We begin with the raw amino-acid sequence, 345 residues long: RNA polymerase II holoenzyme cyclin-like subunit (345 aa).

The region spanning 53–144 (QQINRLGKRM…IGECEFYLIS (92 aa)) is the Cyclin N-terminal domain. The interval 256 to 285 (GLTPQSSSGLQAMLPPQSPAGEGPAEGNKN) is disordered.

It belongs to the cyclin family. Cyclin C subfamily. In terms of assembly, component of the srb8-11 complex, a regulatory module of the Mediator complex.

Its subcellular location is the nucleus. Its function is as follows. Component of the srb8-11 complex. The srb8-11 complex is a regulatory module of the Mediator complex which is itself involved in regulation of basal and activated RNA polymerase II-dependent transcription. The srb8-11 complex may be involved in the transcriptional repression of a subset of genes regulated by Mediator. It may inhibit the association of the Mediator complex with RNA polymerase II to form the holoenzyme complex. The srb8-11 complex phosphorylates the C-terminal domain (CTD) of the largest subunit of RNA polymerase II. This chain is RNA polymerase II holoenzyme cyclin-like subunit (ssn8), found in Neurospora crassa (strain ATCC 24698 / 74-OR23-1A / CBS 708.71 / DSM 1257 / FGSC 987).